Reading from the N-terminus, the 67-residue chain is Small ribosomal subunit protein bS21 (67 aa).

The protein belongs to the bacterial ribosomal protein bS21 family.

This chain is Small ribosomal subunit protein bS21, found in Oleidesulfovibrio alaskensis (strain ATCC BAA-1058 / DSM 17464 / G20) (Desulfovibrio alaskensis).